A 327-amino-acid polypeptide reads, in one-letter code: MSIMKSKIAKTLVVVVVAIAIFTLVLLMLWEGPLGTLTEENLTELNGEVPFRFKDSGSNEEGKDVTLSKFFVCLNKVLRSADDSLSSYLCCGETSEEEGESKKGKYVKNAITEARNMMFRVKDSKDVILEILKKGDKNRNELAETVSNAFSAVETSEGSDQESEGADEQGKIEKLNTALAELYIWIWLKGIPEEDKRTLQFRKTYKENQSVKNLLDGLDEENREVAESTILVKVGKKEDSMHVIEHILTSIFQANGYMEKGSIKQAYLSAKASVAAAGGSLGKKVSEVSDNEGKGLIDSLFGMIGWRNNSNNNSSVSKKKEEQGVNS.

A helical transmembrane segment spans residues 12–32 (LVVVVVAIAIFTLVLLMLWEG). The tract at residues 149–170 (AFSAVETSEGSDQESEGADEQG) is disordered. The segment covering 157-167 (EGSDQESEGAD) has biased composition (acidic residues). Residues 162–227 (ESEGADEQGK…LDEENREVAE (66 aa)) are a coiled coil.

Its subcellular location is the membrane. This is an uncharacterized protein from Encephalitozoon cuniculi (strain GB-M1) (Microsporidian parasite).